The chain runs to 430 residues: Cysteate synthase (430 aa).

Lys-106 carries the N6-(pyridoxal phosphate)lysine modification. 2 residues coordinate pyridoxal 5'-phosphate: Asn-132 and Thr-381.

Belongs to the threonine synthase family. Cysteate synthase subfamily. Homotrimer. It depends on pyridoxal 5'-phosphate as a cofactor.

It catalyses the reaction O-phospho-L-serine + sulfite + H(+) = L-cysteate + phosphate. Its pathway is cofactor biosynthesis; coenzyme M biosynthesis. Functionally, specifically catalyzes the beta-elimination of phosphate from L-phosphoserine and the beta-addition of sulfite to the dehydroalanine intermediate to produce L-cysteate. This is Cysteate synthase from Methanoculleus marisnigri (strain ATCC 35101 / DSM 1498 / JR1).